Consider the following 339-residue polypeptide: Ferredoxin--NADP reductase (339 aa).

The FAD site is built by aspartate 32, glutamine 40, tyrosine 45, valine 85, phenylalanine 120, aspartate 287, and threonine 327.

The protein belongs to the ferredoxin--NADP reductase type 2 family. In terms of assembly, homodimer. FAD is required as a cofactor.

It catalyses the reaction 2 reduced [2Fe-2S]-[ferredoxin] + NADP(+) + H(+) = 2 oxidized [2Fe-2S]-[ferredoxin] + NADPH. In Wolbachia sp. subsp. Brugia malayi (strain TRS), this protein is Ferredoxin--NADP reductase.